A 159-amino-acid chain; its full sequence is NADH-quinone oxidoreductase subunit I (159 aa).

2 consecutive 4Fe-4S ferredoxin-type domains span residues 51–80 and 90–119; these read RRYE…IEAD and TRYD…EGPN. Cys-60, Cys-63, Cys-66, Cys-70, Cys-99, Cys-102, Cys-105, and Cys-109 together coordinate [4Fe-4S] cluster.

The protein belongs to the complex I 23 kDa subunit family. In terms of assembly, NDH-1 is composed of 14 different subunits. Subunits NuoA, H, J, K, L, M, N constitute the membrane sector of the complex. It depends on [4Fe-4S] cluster as a cofactor.

It localises to the cell membrane. It carries out the reaction a quinone + NADH + 5 H(+)(in) = a quinol + NAD(+) + 4 H(+)(out). Functionally, NDH-1 shuttles electrons from NADH, via FMN and iron-sulfur (Fe-S) centers, to quinones in the respiratory chain. The immediate electron acceptor for the enzyme in this species is believed to be ubiquinone. Couples the redox reaction to proton translocation (for every two electrons transferred, four hydrogen ions are translocated across the cytoplasmic membrane), and thus conserves the redox energy in a proton gradient. This Rickettsia africae (strain ESF-5) protein is NADH-quinone oxidoreductase subunit I.